The sequence spans 350 residues: Outer membrane protein A (350 aa).

Residues 1 to 21 (MKKTAIAIAVALAGFATVAQA) form the signal peptide. 8 beta stranded membrane-spanning segments follow: residues 27–37 (TWYAGAKLGWS), 55–66 (QLGAGAFGGYQV), 70–78 (VGFEMGYDW), 96–107 (QGVQLTAKLGYP), 112–120 (LDVYTRLGG), 146–155 (PVFAGGIEYA), 160–167 (IATRLEYQ), and 186–194 (LLSVGVSYR). 4 tandem repeats follow at residues 205 to 206 (AP), 207 to 208 (AP), 209 to 210 (AP), and 211 to 212 (AP). Positions 205 to 212 (APAPAPAP) are 4 X 2 AA tandem repeats of A-P. In terms of domain architecture, OmpA-like spans 214–342 (VQTKHFTLKS…RVEIEVKGVK (129 aa)). A disulfide bridge connects residues cysteine 315 and cysteine 327.

This sequence belongs to the outer membrane OOP (TC 1.B.6) superfamily. OmpA family. In terms of assembly, monomer and homodimer.

It localises to the cell outer membrane. In terms of biological role, with TolR probably plays a role in maintaining the position of the peptidoglycan cell wall in the periplasm. Acts as a porin with low permeability that allows slow penetration of small solutes; an internal gate slows down solute passage. Its function is as follows. Required for conjugation with F-type plasmids; probably serves as the mating receptor on recipient cells. The chain is Outer membrane protein A from Salmonella typhi.